The sequence spans 454 residues: Maintenance of mitochondrial morphology protein 1 (454 aa).

At 1–128 (MSMVIGIGDL…QSSGWGFAHG (128 aa)) the chain is on the lumenal side. Residues 129–149 (LLVGQLSVVAVLAFFIKFFIF) traverse the membrane as a helical segment. Residues 150–454 (GNSSMARPLM…SESETAVDSN (305 aa)) are Cytoplasmic-facing. The 224-residue stretch at 207 to 430 (QSESLDWFNV…EPRFQLIELP (224 aa)) folds into the SMP-LTD domain.

Belongs to the MMM1 family. Homodimer. Component of the ER-mitochondria encounter structure (ERMES) or MDM complex, composed of MMM1, MDM10, MDM12 and MDM34. An MMM1 homodimer associates with one molecule of MDM12 on each side in a pairwise head-to-tail manner, and the SMP-LTD domains of MMM1 and MDM12 generate a continuous hydrophobic tunnel for phospholipid trafficking.

It is found in the endoplasmic reticulum membrane. Its function is as follows. Component of the ERMES/MDM complex, which serves as a molecular tether to connect the endoplasmic reticulum (ER) and mitochondria. Components of this complex are involved in the control of mitochondrial shape and protein biogenesis, and function in nonvesicular lipid trafficking between the ER and mitochondria. The MDM12-MMM1 subcomplex functions in the major beta-barrel assembly pathway that is responsible for biogenesis of all outer membrane beta-barrel proteins, and acts in a late step after the SAM complex. The MDM10-MDM12-MMM1 subcomplex further acts in the TOM40-specific pathway after the action of the MDM12-MMM1 complex. Essential for establishing and maintaining the structure of mitochondria and maintenance of mtDNA nucleoids. The polypeptide is Maintenance of mitochondrial morphology protein 1 (Komagataella phaffii (strain GS115 / ATCC 20864) (Yeast)).